Consider the following 199-residue polypeptide: Prolactin-2 (199 aa).

Disulfide bonds link cysteine 4-cysteine 11, cysteine 58-cysteine 174, and cysteine 191-cysteine 199.

Belongs to the somatotropin/prolactin family.

It localises to the secreted. The chain is Prolactin-2 from Alligator mississippiensis (American alligator).